Here is a 337-residue protein sequence, read N- to C-terminus: Casein kinase I isoform alpha (337 aa).

A Protein kinase domain is found at 17-285 (YKLVRKIGSG…YLRQLFRILF (269 aa)). ATP contacts are provided by residues 23-31 (IGSGSFGDI) and lysine 46. The Proton acceptor role is filled by aspartate 136. A compositionally biased stretch (low complexity) spans 309-325 (AASSSGQGQQAQTPTGK). The interval 309 to 337 (AASSSGQGQQAQTPTGKQTDKSKSNMKGF) is disordered.

It belongs to the protein kinase superfamily. CK1 Ser/Thr protein kinase family. Casein kinase I subfamily. Autophosphorylated.

It is found in the cytoplasm. It localises to the cytoskeleton. The protein localises to the microtubule organizing center. Its subcellular location is the centrosome. The protein resides in the chromosome. It is found in the centromere. It localises to the kinetochore. The protein localises to the nucleus speckle. Its subcellular location is the cilium basal body. The protein resides in the spindle. The catalysed reaction is L-seryl-[protein] + ATP = O-phospho-L-seryl-[protein] + ADP + H(+). It catalyses the reaction L-threonyl-[protein] + ATP = O-phospho-L-threonyl-[protein] + ADP + H(+). Casein kinases are operationally defined by their preferential utilization of acidic proteins such as caseins as substrates. It can phosphorylate a large number of proteins. Participates in Wnt signaling. May play a role in segregating chromosomes during mitosis. May play a role in keratin cytoskeleton disassembly. This chain is Casein kinase I isoform alpha (CSNK1A1), found in Gallus gallus (Chicken).